A 220-amino-acid chain; its full sequence is uncharacterized protein (220 aa).

A run of 4 helical transmembrane segments spans residues 9 to 29, 54 to 74, 105 to 125, and 177 to 197; these read LWITLAILTLVVMINIHGSTQ, YAVHGMRFFALFFWLVPFLAV, VQGIAFVVLICLPLLTAIHLW, and VLAVILTAVSVYLTLRLVIEM.

The protein localises to the cell membrane. This is an uncharacterized protein from Sinorhizobium fredii (strain NBRC 101917 / NGR234).